A 461-amino-acid chain; its full sequence is tRNA modification GTPase MnmE (461 aa).

(6S)-5-formyl-5,6,7,8-tetrahydrofolate contacts are provided by Lys32, Glu89, and Lys128. Positions 224–387 (GHALSIVGKP…LSQKISAFFP (164 aa)) constitute a TrmE-type G domain. Asn234 is a K(+) binding site. Residues 234–239 (NAGKSS), 253–259 (SDIKGTT), and 278–281 (DTAG) each bind GTP. Ser238 is a Mg(2+) binding site. K(+) contacts are provided by Ser253, Ile255, and Thr258. Thr259 serves as a coordination point for Mg(2+). Residue Lys461 coordinates (6S)-5-formyl-5,6,7,8-tetrahydrofolate.

Belongs to the TRAFAC class TrmE-Era-EngA-EngB-Septin-like GTPase superfamily. TrmE GTPase family. Homodimer. Heterotetramer of two MnmE and two MnmG subunits. Requires K(+) as cofactor.

The protein localises to the cytoplasm. Exhibits a very high intrinsic GTPase hydrolysis rate. Involved in the addition of a carboxymethylaminomethyl (cmnm) group at the wobble position (U34) of certain tRNAs, forming tRNA-cmnm(5)s(2)U34. In Helicobacter pylori (strain ATCC 700392 / 26695) (Campylobacter pylori), this protein is tRNA modification GTPase MnmE.